A 234-amino-acid chain; its full sequence is Small ribosomal subunit protein uS5 (234 aa).

Positions 1–10 are enriched in polar residues; that stretch reads MEDIKTTTPE. The tract at residues 1–69 is disordered; sequence MEDIKTTTPE…KDGSGNKPNK (69 aa). Positions 11 to 31 are enriched in basic and acidic residues; sequence VKNEENKTSEVKEGKALEKNN. The S5 DRBM domain maps to 78–141; that stretch reads LEEKIVGVKK…KSAKNNMYKV (64 aa).

Belongs to the universal ribosomal protein uS5 family. In terms of assembly, part of the 30S ribosomal subunit. Contacts proteins S4 and S8.

Functionally, with S4 and S12 plays an important role in translational accuracy. Located at the back of the 30S subunit body where it stabilizes the conformation of the head with respect to the body. This Malacoplasma penetrans (strain HF-2) (Mycoplasma penetrans) protein is Small ribosomal subunit protein uS5.